The sequence spans 528 residues: Lanosterol 14-alpha demethylase (528 aa).

The chain crosses the membrane as a helical span at residues 15 to 37 (LSLSVTQQISILLGVPFVYNLVW). Tyr-64 contributes to the oteseconazole binding site. Residue Tyr-118 participates in itraconazole binding. Gly-307 is a posaconazole binding site. His-377 is a binding site for oteseconazole. Cys-470 provides a ligand contact to heme.

This sequence belongs to the cytochrome P450 family. The cofactor is heme.

The protein localises to the endoplasmic reticulum membrane. The enzyme catalyses a 14alpha-methyl steroid + 3 reduced [NADPH--hemoprotein reductase] + 3 O2 = a Delta(14) steroid + formate + 3 oxidized [NADPH--hemoprotein reductase] + 4 H2O + 4 H(+). It catalyses the reaction a 14alpha-methyl steroid + reduced [NADPH--hemoprotein reductase] + O2 = a 14alpha-hydroxymethyl steroid + oxidized [NADPH--hemoprotein reductase] + H2O + H(+). It carries out the reaction a 14alpha-hydroxymethyl steroid + reduced [NADPH--hemoprotein reductase] + O2 = a 14alpha-formyl steroid + oxidized [NADPH--hemoprotein reductase] + 2 H2O + H(+). The catalysed reaction is a 14alpha-formyl steroid + reduced [NADPH--hemoprotein reductase] + O2 = a Delta(14) steroid + formate + oxidized [NADPH--hemoprotein reductase] + H2O + 2 H(+). The enzyme catalyses lanosterol + 3 reduced [NADPH--hemoprotein reductase] + 3 O2 = 4,4-dimethyl-5alpha-cholesta-8,14,24-trien-3beta-ol + formate + 3 oxidized [NADPH--hemoprotein reductase] + 4 H2O + 4 H(+). It catalyses the reaction lanosterol + reduced [NADPH--hemoprotein reductase] + O2 = 32-hydroxylanosterol + oxidized [NADPH--hemoprotein reductase] + H2O + H(+). It carries out the reaction 32-hydroxylanosterol + reduced [NADPH--hemoprotein reductase] + O2 = 32-oxolanosterol + oxidized [NADPH--hemoprotein reductase] + 2 H2O + H(+). The catalysed reaction is 32-oxolanosterol + reduced [NADPH--hemoprotein reductase] + O2 = 4,4-dimethyl-5alpha-cholesta-8,14,24-trien-3beta-ol + formate + oxidized [NADPH--hemoprotein reductase] + H2O + 2 H(+). The enzyme catalyses eburicol + 3 reduced [NADPH--hemoprotein reductase] + 3 O2 = 14-demethyleburicol + formate + 3 oxidized [NADPH--hemoprotein reductase] + 4 H2O + 4 H(+). It catalyses the reaction eburicol + reduced [NADPH--hemoprotein reductase] + O2 = 32-hydroxyeburicol + oxidized [NADPH--hemoprotein reductase] + H2O + H(+). It carries out the reaction 32-hydroxyeburicol + reduced [NADPH--hemoprotein reductase] + O2 = 32-oxoeburicol + oxidized [NADPH--hemoprotein reductase] + 2 H2O + H(+). The catalysed reaction is 32-oxoeburicol + reduced [NADPH--hemoprotein reductase] + O2 = 14-demethyleburicol + formate + oxidized [NADPH--hemoprotein reductase] + H2O + 2 H(+). The protein operates within steroid biosynthesis; zymosterol biosynthesis; zymosterol from lanosterol: step 1/6. Its activity is regulated as follows. The catalytic activity is inhibited by the binding of azoles clotrimazole, miconazole, fluconazole, ketoconazole, oteseconazole (VT-1161), tetraconazole, the triazole SCH39304, and the triazole derivative ICI 153066. Sterol 14alpha-demethylase that plays a critical role in the third module of ergosterol biosynthesis pathway, being ergosterol the major sterol component in fungal membranes that participates in a variety of functions. The third module or late pathway involves the ergosterol synthesis itself through consecutive reactions that mainly occur in the endoplasmic reticulum (ER) membrane. In filamentous fungi, during the initial step of this module, lanosterol (lanosta-8,24-dien-3beta-ol) can be metabolized to eburicol. Sterol 14alpha-demethylase catalyzes the three-step oxidative removal of the 14alpha-methyl group (C-32) of both these sterols in the form of formate, and converts eburicol and lanosterol to 14-demethyleburicol (4,4,24-trimethylergosta-8,14,24(28)-trienol) and 4,4-dimethyl-5alpha-cholesta-8,14,24-trien-3beta-ol, respectively, which are further metabolized by other enzymes in the pathway to ergosterol. Can also use substrates not intrinsic to fungi, such as 24,25-dihydrolanosterol (DHL), producing 4,4-dimethyl-8,14-cholestadien-3-beta-ol, but at lower rates than the endogenous substrates. This is Lanosterol 14-alpha demethylase from Candida albicans (strain SC5314 / ATCC MYA-2876) (Yeast).